Consider the following 158-residue polypeptide: MQGRLSAWLAKHKLAHRPLGFDYQGTETLQIKAEDWVSIAVALYVYGFNYLRSQCAYDVAPGGSLASVYHLTKINDNADQPEEVCIKVFVPREDPRIPSVLRIWKGANFQERESYDMLGIFYESHPCLKRILMPESWIGWPLRKDYIAPDFYEIQDSH.

It belongs to the complex I 30 kDa subunit family. As to quaternary structure, NDH is composed of at least 16 different subunits, 5 of which are encoded in the nucleus.

The protein localises to the plastid. The protein resides in the chloroplast thylakoid membrane. The enzyme catalyses a plastoquinone + NADH + (n+1) H(+)(in) = a plastoquinol + NAD(+) + n H(+)(out). It catalyses the reaction a plastoquinone + NADPH + (n+1) H(+)(in) = a plastoquinol + NADP(+) + n H(+)(out). NDH shuttles electrons from NAD(P)H:plastoquinone, via FMN and iron-sulfur (Fe-S) centers, to quinones in the photosynthetic chain and possibly in a chloroplast respiratory chain. The immediate electron acceptor for the enzyme in this species is believed to be plastoquinone. Couples the redox reaction to proton translocation, and thus conserves the redox energy in a proton gradient. This Cryptomeria japonica (Japanese cedar) protein is NAD(P)H-quinone oxidoreductase subunit J, chloroplastic.